The primary structure comprises 569 residues: Dihydroxy-acid dehydratase (569 aa).

A [2Fe-2S] cluster-binding site is contributed by Cys61. Mg(2+) is bound at residue Asp93. Cys134 is a [2Fe-2S] cluster binding site. Positions 135 and 136 each coordinate Mg(2+). At Lys136 the chain carries N6-carboxylysine. A [2Fe-2S] cluster-binding site is contributed by Cys211. Glu462 lines the Mg(2+) pocket. Ser488 functions as the Proton acceptor in the catalytic mechanism.

It belongs to the IlvD/Edd family. In terms of assembly, homodimer. [2Fe-2S] cluster is required as a cofactor. It depends on Mg(2+) as a cofactor.

The enzyme catalyses (2R)-2,3-dihydroxy-3-methylbutanoate = 3-methyl-2-oxobutanoate + H2O. The catalysed reaction is (2R,3R)-2,3-dihydroxy-3-methylpentanoate = (S)-3-methyl-2-oxopentanoate + H2O. Its pathway is amino-acid biosynthesis; L-isoleucine biosynthesis; L-isoleucine from 2-oxobutanoate: step 3/4. It participates in amino-acid biosynthesis; L-valine biosynthesis; L-valine from pyruvate: step 3/4. Functions in the biosynthesis of branched-chain amino acids. Catalyzes the dehydration of (2R,3R)-2,3-dihydroxy-3-methylpentanoate (2,3-dihydroxy-3-methylvalerate) into 2-oxo-3-methylpentanoate (2-oxo-3-methylvalerate) and of (2R)-2,3-dihydroxy-3-methylbutanoate (2,3-dihydroxyisovalerate) into 2-oxo-3-methylbutanoate (2-oxoisovalerate), the penultimate precursor to L-isoleucine and L-valine, respectively. The sequence is that of Dihydroxy-acid dehydratase from Tropheryma whipplei (strain TW08/27) (Whipple's bacillus).